We begin with the raw amino-acid sequence, 622 residues long: Calmodulin-binding protein 60 C (622 aa).

A compositionally biased stretch (basic and acidic residues) spans 1-19; sequence MQTRYMERTNSMREKRKLE. The segment at 1–35 is disordered; the sequence is MQTRYMERTNSMREKRKLEEDDNQQQQQQPERKRP. Residues 10–89 are calmodulin-binding; the sequence is NSMREKRKLE…RLSERSSPKR (80 aa). A DNA-binding region spans residues 159-282; the sequence is EDDDGWSGEE…AFHKKLNKAG (124 aa).

Belongs to the plant ACBP60 protein family. As to quaternary structure, interacts with calmodulin (CaM). Expressed in stems, flowers and root.

It is found in the nucleus. Its function is as follows. Transcription activator that binds DNA in a sequence-specific manner, likely 5'-GAAATTTTGG-3', to promote the expression of target genes. This chain is Calmodulin-binding protein 60 C, found in Arabidopsis thaliana (Mouse-ear cress).